Reading from the N-terminus, the 240-residue chain is Small ribosomal subunit protein uS3 (240 aa).

One can recognise a KH type-2 domain in the interval 39–107 (IREFIKEECK…ELHLNIVEVR (69 aa)). Residues 212–222 (PQARDRRHAEL) are compositionally biased toward basic and acidic residues. The tract at residues 212-240 (PQARDRRHAELQEGGGPRPQGGGRPRRDR) is disordered. A compositionally biased stretch (gly residues) spans 224–234 (EGGGPRPQGGG).

This sequence belongs to the universal ribosomal protein uS3 family. In terms of assembly, part of the 30S ribosomal subunit. Forms a tight complex with proteins S10 and S14.

Functionally, binds the lower part of the 30S subunit head. Binds mRNA in the 70S ribosome, positioning it for translation. The protein is Small ribosomal subunit protein uS3 of Dinoroseobacter shibae (strain DSM 16493 / NCIMB 14021 / DFL 12).